The sequence spans 366 residues: Cobalt-precorrin-5B C(1)-methyltransferase (366 aa).

The protein belongs to the CbiD family.

The catalysed reaction is Co-precorrin-5B + S-adenosyl-L-methionine = Co-precorrin-6A + S-adenosyl-L-homocysteine. It participates in cofactor biosynthesis; adenosylcobalamin biosynthesis; cob(II)yrinate a,c-diamide from sirohydrochlorin (anaerobic route): step 6/10. Functionally, catalyzes the methylation of C-1 in cobalt-precorrin-5B to form cobalt-precorrin-6A. The protein is Cobalt-precorrin-5B C(1)-methyltransferase of Thermus thermophilus (strain ATCC BAA-163 / DSM 7039 / HB27).